A 743-amino-acid polypeptide reads, in one-letter code: NAD(P)H-quinone oxidoreductase subunit 5, chloroplastic (743 aa).

A run of 16 helical transmembrane segments spans residues Trp9–Phe29, Trp40–Ile60, Ile89–Ile109, Phe125–Ile145, Ile147–Thr167, Gly185–Phe205, Asn219–Ala239, Thr258–Ala278, Leu280–Ile300, Leu327–Ile347, Ala354–Phe374, Thr396–Ser416, Trp425–Tyr445, Ile546–Pro566, Leu607–Tyr627, and Phe721–Phe741.

The protein belongs to the complex I subunit 5 family. As to quaternary structure, NDH is composed of at least 16 different subunits, 5 of which are encoded in the nucleus.

It is found in the plastid. The protein localises to the chloroplast thylakoid membrane. The enzyme catalyses a plastoquinone + NADH + (n+1) H(+)(in) = a plastoquinol + NAD(+) + n H(+)(out). It catalyses the reaction a plastoquinone + NADPH + (n+1) H(+)(in) = a plastoquinol + NADP(+) + n H(+)(out). In terms of biological role, NDH shuttles electrons from NAD(P)H:plastoquinone, via FMN and iron-sulfur (Fe-S) centers, to quinones in the photosynthetic chain and possibly in a chloroplast respiratory chain. The immediate electron acceptor for the enzyme in this species is believed to be plastoquinone. Couples the redox reaction to proton translocation, and thus conserves the redox energy in a proton gradient. The chain is NAD(P)H-quinone oxidoreductase subunit 5, chloroplastic (ndhF) from Citrus sinensis (Sweet orange).